Reading from the N-terminus, the 78-residue chain is Small outer capsid protein (78 aa).

The protein belongs to the Tevenvirinae Soc family. In terms of assembly, homotrimer. Interacts with the major capsid protein; three soc molecules associate with each interface between the major capsid protein facets.

It localises to the virion. Capsid decoration protein which helps to stabilize the capsid against extremes of pH and temperature. Once maturation and expansion of the capsid has occured, trimers of soc attach the interfaces between the hexamer of the major capsid protein. Acts as a 'glue' between neighboring hexameric capsomers. Dispensable for the head morphogenesis and phage infection. The protein is Small outer capsid protein of Escherichia phage RB69 (Bacteriophage RB69).